The chain runs to 588 residues: ATP-dependent lipid A-core flippase (588 aa).

Helical transmembrane passes span Phe23 to Gly43, Phe56 to Thr76, Asp141 to Met161, Val162 to Val182, Leu257 to Ile277, and Thr278 to Met298. An ABC transmembrane type-1 domain is found at Leu28–Arg310. The 235-residue stretch at Ile342–Val576 folds into the ABC transporter domain. An ATP-binding site is contributed by Gly375–Thr382.

Belongs to the ABC transporter superfamily. Lipid exporter (TC 3.A.1.106) family. Homodimer.

It is found in the cell inner membrane. The catalysed reaction is ATP + H2O + lipid A-core oligosaccharideSide 1 = ADP + phosphate + lipid A-core oligosaccharideSide 2.. Involved in lipopolysaccharide (LPS) biosynthesis. Translocates lipid A-core from the inner to the outer leaflet of the inner membrane. Transmembrane domains (TMD) form a pore in the inner membrane and the ATP-binding domain (NBD) is responsible for energy generation. The protein is ATP-dependent lipid A-core flippase of Legionella pneumophila (strain Lens).